The chain runs to 393 residues: Chorismate synthase (393 aa).

NADP(+)-binding residues include arginine 48 and arginine 54. FMN contacts are provided by residues 125–127 (RSS), 238–239 (NA), glycine 278, 293–297 (KPTSS), and arginine 319. The segment at 355–393 (ACTTPKIPGHTGPREGQEEGPSDSEPKVEFADDPEPDEA) is disordered.

It belongs to the chorismate synthase family. Homotetramer. FMNH2 is required as a cofactor.

The catalysed reaction is 5-O-(1-carboxyvinyl)-3-phosphoshikimate = chorismate + phosphate. Its pathway is metabolic intermediate biosynthesis; chorismate biosynthesis; chorismate from D-erythrose 4-phosphate and phosphoenolpyruvate: step 7/7. Its function is as follows. Catalyzes the anti-1,4-elimination of the C-3 phosphate and the C-6 proR hydrogen from 5-enolpyruvylshikimate-3-phosphate (EPSP) to yield chorismate, which is the branch point compound that serves as the starting substrate for the three terminal pathways of aromatic amino acid biosynthesis. This reaction introduces a second double bond into the aromatic ring system. The protein is Chorismate synthase of Nitrosospira multiformis (strain ATCC 25196 / NCIMB 11849 / C 71).